The chain runs to 299 residues: Ribosomal RNA small subunit methyltransferase H (299 aa).

S-adenosyl-L-methionine contacts are provided by residues G45–H47, D64, F92, D108, and Q115. A disordered region spans residues P275–Q299. A compositionally biased stretch (basic residues) spans P284 to Q299.

It belongs to the methyltransferase superfamily. RsmH family.

The protein localises to the cytoplasm. The catalysed reaction is cytidine(1402) in 16S rRNA + S-adenosyl-L-methionine = N(4)-methylcytidine(1402) in 16S rRNA + S-adenosyl-L-homocysteine + H(+). Functionally, specifically methylates the N4 position of cytidine in position 1402 (C1402) of 16S rRNA. In Gloeothece citriformis (strain PCC 7424) (Cyanothece sp. (strain PCC 7424)), this protein is Ribosomal RNA small subunit methyltransferase H.